Consider the following 409-residue polypeptide: E3 ubiquitin-protein ligase MARCHF4 (409 aa).

Positions 1 to 17 (MLMPLGGLLWWWCCCCG) are cleaved as a signal peptide. Positions 92–133 (GPREAVGRETPPLPPPPPLPPSGDDDWDGPATGPPASLLSSA) are disordered. The segment covering 102–112 (PPLPPPPPLPP) has biased composition (pro residues). The RING-CH-type zinc-finger motif lies at 154-214 (DSGMRTPLCR…ELCYYKYHVI (61 aa)). Residues C162, C165, C178, C180, H188, C191, C204, and C207 each contribute to the Zn(2+) site. Transmembrane regions (helical) follow at residues 242 to 262 (LGSLFLIASISWLIWSTFSPS) and 271 to 291 (LFQICYGMYGFMDVVCIGLII). Disordered stretches follow at residues 323 to 372 (EDQK…GPVS) and 389 to 409 (PHDQRSTQGSGRELVMRVTTV). Residues 328-343 (GGRTNLQTSSSAQANL) show a composition bias toward polar residues.

It is found in the golgi apparatus membrane. It carries out the reaction S-ubiquitinyl-[E2 ubiquitin-conjugating enzyme]-L-cysteine + [acceptor protein]-L-lysine = [E2 ubiquitin-conjugating enzyme]-L-cysteine + N(6)-ubiquitinyl-[acceptor protein]-L-lysine.. It participates in protein modification; protein ubiquitination. Functionally, E3 ubiquitin-protein ligase that may mediate ubiquitination of MHC-I and CD4, and promote their subsequent endocytosis and sorting to lysosomes via multivesicular bodies. E3 ubiquitin ligases accept ubiquitin from an E2 ubiquitin-conjugating enzyme in the form of a thioester and then directly transfer the ubiquitin to targeted substrates. The sequence is that of E3 ubiquitin-protein ligase MARCHF4 (Marchf4) from Mus musculus (Mouse).